Here is a 149-residue protein sequence, read N- to C-terminus: Large ribosomal subunit protein eL19 (149 aa).

Residues 45–130 (VDEGAIQAKD…RDLYDKAGGG (86 aa)) are disordered. The span at 58–85 (NSRGRARERQKKRAYGHQKGAGSRKGKA) shows a compositional bias: basic residues. Positions 90-113 (NSKEDWESRIRAQRTKLRELRDEG) are enriched in basic and acidic residues.

It belongs to the eukaryotic ribosomal protein eL19 family. Part of the 50S ribosomal subunit.

In terms of biological role, binds to the 23S rRNA. Located at the polypeptide exit tunnel on the outside of the subunit. The sequence is that of Large ribosomal subunit protein eL19 from Haloarcula marismortui (strain ATCC 43049 / DSM 3752 / JCM 8966 / VKM B-1809) (Halobacterium marismortui).